A 302-amino-acid chain; its full sequence is Actin maturation protease (302 aa).

Residues 1 to 26 are disordered; it reads MPHTNEDPTAQQAGVILDPPPPLPPP. Residues 85-205 form a peptidase C39-like region; sequence SLIQEGPQCG…WAVISGVLFG (121 aa). C93 is a catalytic residue.

The protein belongs to the ACTMAP family.

It is found in the cytoplasm. It catalyses the reaction N-terminal N(alpha)-acetyl-L-methionyl-L-aspartyl-[protein] + H2O = N-terminal L-aspartyl-[protein] + N-acetyl-L-methionine. The enzyme catalyses N-terminal N(alpha)-acetyl-L-methionyl-L-glutamyl-[protein] + H2O = N-terminal L-glutamyl-[protein] + N-acetyl-L-methionine. The catalysed reaction is N-terminal N(alpha)-acetyl-L-cysteinyl-L-aspartyl-[protein] + H2O = N-terminal L-aspartyl-[protein] + N-acetyl-L-cysteine. It carries out the reaction N-terminal N(alpha)-acetyl-L-cysteinyl-L-glutamyl-[protein] + H2O = N-terminal L-glutamyl-[protein] + N-acetyl-L-cysteine. Functionally, actin maturation protease that specifically mediates the cleavage of immature acetylated N-terminal actin, thereby contributing to actin maturation. Cleaves N-terminal acetylated methionine of immature cytoplasmic beta- and gamma-actin after translation. Cleaves N-terminal acetylated cysteine of muscle alpha-actin after canonical removal of N-terminal methionine. The chain is Actin maturation protease from Xenopus tropicalis (Western clawed frog).